We begin with the raw amino-acid sequence, 265 residues long: NAD kinase 2 (265 aa).

Residue Asp51 is the Proton acceptor of the active site. NAD(+) contacts are provided by residues 51 to 52 (DG), 122 to 123 (NE), Arg149, Asp151, 162 to 167 (TAYNKS), and Ala186.

This sequence belongs to the NAD kinase family. The cofactor is a divalent metal cation.

Its subcellular location is the cytoplasm. The enzyme catalyses NAD(+) + ATP = ADP + NADP(+) + H(+). Involved in the regulation of the intracellular balance of NAD and NADP, and is a key enzyme in the biosynthesis of NADP. Catalyzes specifically the phosphorylation on 2'-hydroxyl of the adenosine moiety of NAD to yield NADP. In Bacillus licheniformis (strain ATCC 14580 / DSM 13 / JCM 2505 / CCUG 7422 / NBRC 12200 / NCIMB 9375 / NCTC 10341 / NRRL NRS-1264 / Gibson 46), this protein is NAD kinase 2.